The primary structure comprises 121 residues: Small ribosomal subunit protein bS16 (121 aa).

Over residues 97–114 (LAKAKTKDGDNDSSKAES) the composition is skewed to basic and acidic residues. The tract at residues 97–121 (LAKAKTKDGDNDSSKAESESNEAET) is disordered.

Belongs to the bacterial ribosomal protein bS16 family.

The sequence is that of Small ribosomal subunit protein bS16 from Prochlorococcus marinus (strain MIT 9301).